Here is a 130-residue protein sequence, read N- to C-terminus: Putative pre-16S rRNA nuclease (130 aa).

The protein belongs to the YqgF nuclease family.

It is found in the cytoplasm. Could be a nuclease involved in processing of the 5'-end of pre-16S rRNA. This chain is Putative pre-16S rRNA nuclease, found in Sulfurimonas denitrificans (strain ATCC 33889 / DSM 1251) (Thiomicrospira denitrificans (strain ATCC 33889 / DSM 1251)).